We begin with the raw amino-acid sequence, 379 residues long: tRNA-specific 2-thiouridylase MnmA (379 aa).

Residues 23–30 (AMSGGVDS) and Leu-49 contribute to the ATP site. The active-site Nucleophile is Cys-117. Cys-117 and Cys-214 are joined by a disulfide. An ATP-binding site is contributed by Gly-141. Residues 163-165 (RDQ) are interaction with tRNA. The Cysteine persulfide intermediate role is filled by Cys-214.

It belongs to the MnmA/TRMU family.

The protein resides in the cytoplasm. The catalysed reaction is S-sulfanyl-L-cysteinyl-[protein] + uridine(34) in tRNA + AH2 + ATP = 2-thiouridine(34) in tRNA + L-cysteinyl-[protein] + A + AMP + diphosphate + H(+). In terms of biological role, catalyzes the 2-thiolation of uridine at the wobble position (U34) of tRNA, leading to the formation of s(2)U34. The polypeptide is tRNA-specific 2-thiouridylase MnmA (Cereibacter sphaeroides (strain ATCC 17023 / DSM 158 / JCM 6121 / CCUG 31486 / LMG 2827 / NBRC 12203 / NCIMB 8253 / ATH 2.4.1.) (Rhodobacter sphaeroides)).